A 520-amino-acid polypeptide reads, in one-letter code: Succinyl-CoA:3-ketoacid coenzyme A transferase 2A, mitochondrial (520 aa).

The transit peptide at 1–39 directs the protein to the mitochondrion; it reads MAALRLLAWAFSRRVSAHRPQPTLPHHLIRHYPTTRCGK. The interval 280 to 299 is disordered; the sequence is ERLTTRDSPPAPGSKDQDPK. E342 serves as the catalytic 5-glutamyl coenzyme A thioester intermediate.

The protein belongs to the 3-oxoacid CoA-transferase family. As to quaternary structure, homodimer. In terms of tissue distribution, expressed in flagella of epididymal sperm.

It localises to the mitochondrion. The enzyme catalyses a 3-oxo acid + succinyl-CoA = a 3-oxoacyl-CoA + succinate. Its pathway is ketone metabolism; succinyl-CoA degradation; acetoacetyl-CoA from succinyl-CoA: step 1/1. In terms of biological role, key enzyme for ketone body catabolism. Transfers the CoA moiety from succinate to acetoacetate. Formation of the enzyme-CoA intermediate proceeds via an unstable anhydride species formed between the carboxylate groups of the enzyme and substrate. Probably play and important roles in the energy metabolism of spermatozoa. The protein is Succinyl-CoA:3-ketoacid coenzyme A transferase 2A, mitochondrial (Oxct2a) of Rattus norvegicus (Rat).